A 367-amino-acid chain; its full sequence is Phosphoribosylaminoimidazole-succinocarboxamide synthase (367 aa).

The protein belongs to the SAICAR synthetase family.

It catalyses the reaction 5-amino-1-(5-phospho-D-ribosyl)imidazole-4-carboxylate + L-aspartate + ATP = (2S)-2-[5-amino-1-(5-phospho-beta-D-ribosyl)imidazole-4-carboxamido]succinate + ADP + phosphate + 2 H(+). Its pathway is purine metabolism; IMP biosynthesis via de novo pathway; 5-amino-1-(5-phospho-D-ribosyl)imidazole-4-carboxamide from 5-amino-1-(5-phospho-D-ribosyl)imidazole-4-carboxylate: step 1/2. The protein is Phosphoribosylaminoimidazole-succinocarboxamide synthase of Shewanella sp. (strain ANA-3).